Here is a 95-residue protein sequence, read N- to C-terminus: Small ubiquitin-related modifier 2 (95 aa).

A Glycyl lysine isopeptide (Lys-Gly) (interchain with G-Cter in SUMO) cross-link involves residue lysine 11. The region spanning 16–95 (DHINLKVAGQ…VFQQQTGGSF (80 aa)) is the Ubiquitin-like domain. Glycine 93 participates in a covalent cross-link: Glycyl lysine isopeptide (Gly-Lys) (interchain with K-? in acceptor proteins). Positions 94–95 (SF) are excised as a propeptide.

It belongs to the ubiquitin family. SUMO subfamily. Interacts with sae2 and ube2i. Covalently attached to a number of proteins, including top2. Polymeric chains can be formed through Lys-11 cross-linking. Post-translationally, cleavage of precursor form by a sentrin-specific protease is necessary for function.

Its subcellular location is the nucleus. Ubiquitin-like protein that can be covalently attached to proteins as a monomer or as a lysine-linked polymer. Covalent attachment via an isopeptide bond to its substrates requires prior activation by the E1 complex sae1-sae2 and linkage to the E2 enzyme ube2i, and can be promoted by an E3 ligase such as pias1-4. This post-translational modification on lysine residues of proteins plays a crucial role in a number of cellular processes such as nuclear transport, DNA replication and repair, mitosis and signal transduction. Polymeric sumo2 chains are also susceptible to polyubiquitination which functions as a signal for proteasomal degradation of modified proteins. The chain is Small ubiquitin-related modifier 2 (sumo2) from Xenopus tropicalis (Western clawed frog).